Reading from the N-terminus, the 149-residue chain is Large-conductance mechanosensitive channel (149 aa).

3 helical membrane-spanning segments follow: residues 10-30 (FALKGNVMDLAVGVIIGGAFA), 41-61 (IMPIVAFIVGGEINFKNMFLI), and 87-107 (GSFITVLINFLILAFIIFMMV).

Belongs to the MscL family. In terms of assembly, homopentamer.

It localises to the cell inner membrane. Its function is as follows. Channel that opens in response to stretch forces in the membrane lipid bilayer. May participate in the regulation of osmotic pressure changes within the cell. The protein is Large-conductance mechanosensitive channel of Psychrobacter cryohalolentis (strain ATCC BAA-1226 / DSM 17306 / VKM B-2378 / K5).